A 60-amino-acid polypeptide reads, in one-letter code: Stress response protein YkoL (60 aa).

This Bacillus subtilis (strain 168) protein is Stress response protein YkoL (ykoL).